Here is a 243-residue protein sequence, read N- to C-terminus: 1-(5-phosphoribosyl)-5-[(5-phosphoribosylamino)methylideneamino] imidazole-4-carboxamide isomerase (243 aa).

The active-site Proton acceptor is aspartate 14. The active-site Proton donor is aspartate 135.

The protein belongs to the HisA/HisF family.

The protein localises to the cytoplasm. It carries out the reaction 1-(5-phospho-beta-D-ribosyl)-5-[(5-phospho-beta-D-ribosylamino)methylideneamino]imidazole-4-carboxamide = 5-[(5-phospho-1-deoxy-D-ribulos-1-ylimino)methylamino]-1-(5-phospho-beta-D-ribosyl)imidazole-4-carboxamide. The protein operates within amino-acid biosynthesis; L-histidine biosynthesis; L-histidine from 5-phospho-alpha-D-ribose 1-diphosphate: step 4/9. In Rubrobacter xylanophilus (strain DSM 9941 / JCM 11954 / NBRC 16129 / PRD-1), this protein is 1-(5-phosphoribosyl)-5-[(5-phosphoribosylamino)methylideneamino] imidazole-4-carboxamide isomerase.